Reading from the N-terminus, the 478-residue chain is Pyruvate kinase (478 aa).

R35 serves as a coordination point for substrate. K(+) is bound by residues N37, S39, and D69. 37 to 40 (NMSH) contributes to the ATP binding site. ATP-binding residues include R76 and K157. E219 provides a ligand contact to Mg(2+). 3 residues coordinate substrate: G242, D243, and T275. D243 lines the Mg(2+) pocket.

Belongs to the pyruvate kinase family. In terms of assembly, homotetramer. Requires Mg(2+) as cofactor. K(+) serves as cofactor.

It carries out the reaction pyruvate + ATP = phosphoenolpyruvate + ADP + H(+). Its pathway is carbohydrate degradation; glycolysis; pyruvate from D-glyceraldehyde 3-phosphate: step 5/5. The protein is Pyruvate kinase (pyk) of Methylorubrum extorquens (strain ATCC 14718 / DSM 1338 / JCM 2805 / NCIMB 9133 / AM1) (Methylobacterium extorquens).